The primary structure comprises 227 residues: NAD(P)H-quinone oxidoreductase subunit K, chloroplastic (227 aa).

The [4Fe-4S] cluster site is built by C43, C44, C108, and C139. Over residues 173-192 (RSFTTNHKFQVGRSSHTGNY) the composition is skewed to polar residues. The segment at 173 to 201 (RSFTTNHKFQVGRSSHTGNYDQGFLSKPP) is disordered.

It belongs to the complex I 20 kDa subunit family. As to quaternary structure, NDH is composed of at least 16 different subunits, 5 of which are encoded in the nucleus. It depends on [4Fe-4S] cluster as a cofactor.

It localises to the plastid. The protein resides in the chloroplast thylakoid membrane. It catalyses the reaction a plastoquinone + NADH + (n+1) H(+)(in) = a plastoquinol + NAD(+) + n H(+)(out). The catalysed reaction is a plastoquinone + NADPH + (n+1) H(+)(in) = a plastoquinol + NADP(+) + n H(+)(out). In terms of biological role, NDH shuttles electrons from NAD(P)H:plastoquinone, via FMN and iron-sulfur (Fe-S) centers, to quinones in the photosynthetic chain and possibly in a chloroplast respiratory chain. The immediate electron acceptor for the enzyme in this species is believed to be plastoquinone. Couples the redox reaction to proton translocation, and thus conserves the redox energy in a proton gradient. The polypeptide is NAD(P)H-quinone oxidoreductase subunit K, chloroplastic (Trachelium caeruleum (Blue throatwort)).